The sequence spans 368 residues: 3-dehydroquinate synthase (368 aa).

Residues 69 to 74 (DGEAYK), 103 to 107 (GVIGD), 127 to 128 (TT), lysine 140, and lysine 149 each bind NAD(+). Glutamate 182, histidine 245, and histidine 262 together coordinate Zn(2+).

The protein belongs to the sugar phosphate cyclases superfamily. Dehydroquinate synthase family. Co(2+) is required as a cofactor. The cofactor is Zn(2+). NAD(+) serves as cofactor.

Its subcellular location is the cytoplasm. The enzyme catalyses 7-phospho-2-dehydro-3-deoxy-D-arabino-heptonate = 3-dehydroquinate + phosphate. The protein operates within metabolic intermediate biosynthesis; chorismate biosynthesis; chorismate from D-erythrose 4-phosphate and phosphoenolpyruvate: step 2/7. Its function is as follows. Catalyzes the conversion of 3-deoxy-D-arabino-heptulosonate 7-phosphate (DAHP) to dehydroquinate (DHQ). The sequence is that of 3-dehydroquinate synthase from Pseudomonas aeruginosa (strain UCBPP-PA14).